Reading from the N-terminus, the 160-residue chain is Large ribosomal subunit protein uL22c (160 aa).

The protein belongs to the universal ribosomal protein uL22 family. Part of the 50S ribosomal subunit.

The protein localises to the plastid. It is found in the chloroplast. In terms of biological role, this protein binds specifically to 23S rRNA. Functionally, the globular domain of the protein is located near the polypeptide exit tunnel on the outside of the subunit, while an extended beta-hairpin is found that lines the wall of the exit tunnel in the center of the 70S ribosome. In Crucihimalaya wallichii (Rock-cress), this protein is Large ribosomal subunit protein uL22c (rpl22).